The primary structure comprises 787 residues: Longitudinals lacking protein, isoforms A/B/D/L (787 aa).

Residues 32–97 (VDCTLAAEGK…MYRGEVNISQ (66 aa)) enclose the BTB domain. Disordered stretches follow at residues 115–200 (LSDN…SSVL), 228–340 (SSGP…ASAS), 506–560 (AKDV…SGGK), and 653–677 (TTGS…SVLG). Low complexity-rich tracts occupy residues 162–175 (SGDV…SSSP), 228–251 (SSGP…LTST), 263–293 (TSST…QTTS), 329–340 (NSATGPNPASAS), 537–560 (HSSS…SGGK), and 659–668 (SPSNSGHNNS). Residues 685 to 707 (HPCPVCGRVYKLKSSLRNHQKWE) form a C2H2-type 1; degenerate zinc finger. A C2H2-type 2 zinc finger spans residues 714–737 (FQCPFCVYRAKQKMHIGRHMERMH).

Isoform D interacts with JIL-1. In terms of tissue distribution, by stage 11, isoform B is expressed throughout the mesoderm, whereas isoform A, isoform D and isoform L are expressed throughout the ectoderm. Expression becomes restricted during later stages; starting from stage 14 to 16, isoform B is expressed in muscle. Isoform A, isoform D, and at low levels isoform B, are expressed in the CNS. Expression is also seen in specific types of cells in the embryo; isoform A and isoform L are expressed in a dynamic pattern in the ventral neurogenic region starting at stage 7. Isoform L is expressed around the tracheal pits at stage 11.

Its subcellular location is the nucleus. In terms of biological role, putative transcription factor required for axon growth and guidance in the central and peripheral nervous systems. Repels CNS axons away from the midline by promoting the expression of the midline repellent sli and its receptor robo. This is Longitudinals lacking protein, isoforms A/B/D/L from Drosophila melanogaster (Fruit fly).